We begin with the raw amino-acid sequence, 63 residues long: Large ribosomal subunit protein uL29 (63 aa).

Belongs to the universal ribosomal protein uL29 family.

The chain is Large ribosomal subunit protein uL29 from Alteromonas mediterranea (strain DSM 17117 / CIP 110805 / LMG 28347 / Deep ecotype).